Consider the following 83-residue polypeptide: Putative membrane protein insertion efficiency factor (83 aa).

Residues 63-83 (GGNDPVPDHFSLRRNKTDISD) are disordered. The span at 68-83 (VPDHFSLRRNKTDISD) shows a compositional bias: basic and acidic residues.

It belongs to the UPF0161 family.

It is found in the cell membrane. Its function is as follows. Could be involved in insertion of integral membrane proteins into the membrane. This is Putative membrane protein insertion efficiency factor from Streptococcus agalactiae serotype Ia (strain ATCC 27591 / A909 / CDC SS700).